Reading from the N-terminus, the 209-residue chain is MARYTGPLCKLCRREGMKLYLKGERCYTDKCAFDRRPYAPGQHGQRRAKLTQYGIQLRAKQTVKRIYGILERQFERYVEKAMQKAGDTRENLIQILEARLDNVVYRMGFAINRRQARQLVNHGHFLVNGKKVNIPSYLLKPNDVVELREKSRDLEVIKKAVEANKERSVVPWIEVDYDNYRGTFLRYPSLEEVTDLPVDLQTVIEFYSR.

The region spanning 98–161 is the S4 RNA-binding domain; it reads ARLDNVVYRM…RDLEVIKKAV (64 aa).

It belongs to the universal ribosomal protein uS4 family. As to quaternary structure, part of the 30S ribosomal subunit. Contacts protein S5. The interaction surface between S4 and S5 is involved in control of translational fidelity.

Its function is as follows. One of the primary rRNA binding proteins, it binds directly to 16S rRNA where it nucleates assembly of the body of the 30S subunit. In terms of biological role, with S5 and S12 plays an important role in translational accuracy. In Thermotoga petrophila (strain ATCC BAA-488 / DSM 13995 / JCM 10881 / RKU-1), this protein is Small ribosomal subunit protein uS4.